Reading from the N-terminus, the 461-residue chain is Cysteine--tRNA ligase (461 aa).

Cys-30 serves as a coordination point for Zn(2+). The 'HIGH' region motif lies at 32–42; the sequence is VTVYDLCHIGH. Zn(2+) is bound by residues Cys-211, His-236, and Glu-240. The 'KMSKS' region signature appears at 268–272; that stretch reads KMSKS. Residue Lys-271 participates in ATP binding.

Belongs to the class-I aminoacyl-tRNA synthetase family. Monomer. Zn(2+) is required as a cofactor.

The protein localises to the cytoplasm. It catalyses the reaction tRNA(Cys) + L-cysteine + ATP = L-cysteinyl-tRNA(Cys) + AMP + diphosphate. In Shewanella sp. (strain ANA-3), this protein is Cysteine--tRNA ligase.